A 579-amino-acid chain; its full sequence is MSAPTSRHLYGRLLGYVKPHWRMFALSIVGLILTAATEPMLPALFKPLLDEGFVAKDQDFIRWVPLLLLGLFVLRGVASFISTYSMAWVGSRLVMDLRAAMFDKLMALPTRYFDQNPSGQLIAQLAFNVTQVTQSATSSLTTLVRDTVTVLGLLGYLVWLNWRLTLIVFALVPLTLWVVRVASKRLRGLSRKAQENIGDLTQVVDEAVGGHRVVKLYGGETYEQARFHRAANLARQFEMKRVAANAVYEPVIQFIAAIALAIIVFIAAGQASANTTTVGGFVAFFMAMLLLFAPLKRLTAVNDQLQRGLAASETIFALLDQDAERDTGTREPAHIEGRLAFRDVGLTYPGKQTPALARISLDIAPGETVALVGASGSGKTTLANLVPRFYDPDAGRIELDGVDIRDVKLQSLRGHIALVSQDVVLFNDTLAHNIAYGSKREASPDEIRAACVAAHAWDFIQAMPDGLDTLIGENGMRLSGGQRQRIAIARAILKNAPILILDEATSALDSESERHVQAALETLMQNRTTLVIAHRLSTIERANRIVVLEGGRIVETGAHADLLAKQGRYAQLHALQFSQ.

5 consecutive transmembrane segments (helical) span residues phenylalanine 24–leucine 44, tryptophan 63–threonine 83, valine 150–alanine 170, valine 251–alanine 271, and threonine 275–leucine 295. The ABC transmembrane type-1 domain maps to alanine 25 to arginine 307. Residues leucine 339 to leucine 575 form the ABC transporter domain. Glycine 373 to threonine 380 serves as a coordination point for ATP.

Belongs to the ABC transporter superfamily. Lipid exporter (TC 3.A.1.106) family. As to quaternary structure, homodimer.

It is found in the cell inner membrane. The enzyme catalyses ATP + H2O + lipid A-core oligosaccharideSide 1 = ADP + phosphate + lipid A-core oligosaccharideSide 2.. Functionally, involved in lipopolysaccharide (LPS) biosynthesis. Translocates lipid A-core from the inner to the outer leaflet of the inner membrane. Transmembrane domains (TMD) form a pore in the inner membrane and the ATP-binding domain (NBD) is responsible for energy generation. This Thiobacillus denitrificans (strain ATCC 25259 / T1) protein is ATP-dependent lipid A-core flippase.